Here is a 222-residue protein sequence, read N- to C-terminus: Uridine diphosphate glucose pyrophosphatase NUDT14 (222 aa).

Residues 38–206 (KTHDSVTILM…DIPKTLGVIY (169 aa)) form the Nudix hydrolase domain. Positions 111-129 (PGLSLEEAACKEAWEECGY) match the Nudix box motif.

The protein belongs to the Nudix hydrolase family. In terms of assembly, homodimer. The cofactor is Mg(2+).

The protein resides in the cytoplasm. It catalyses the reaction UDP-sugar + H2O = UMP + alpha-D-aldose 1-phosphate.. In terms of biological role, hydrolyzes UDP-glucose to glucose 1-phosphate and UMP and ADP-ribose to ribose 5-phosphate and AMP. The physiological substrate is probably UDP-glucose. Poor activity on other substrates such as ADP-glucose, CDP-glucose, GDP-glucose and GDP-mannose. The protein is Uridine diphosphate glucose pyrophosphatase NUDT14 (Nudt14) of Mus musculus (Mouse).